The following is a 41-amino-acid chain: Cuticle protein 32 (41 aa).

4 consecutive repeat copies span residues 17–20 (AAPA), 25–28 (AAPA), 31–34 (AAPA), and 38–41 (AAPA).

Its function is as follows. Component of the cuticle of migratory locust which contains more than 100 different structural proteins. This Locusta migratoria (Migratory locust) protein is Cuticle protein 32.